Here is a 246-residue protein sequence, read N- to C-terminus: Sortase B (246 aa).

The chain crosses the membrane as a helical span at residues 5-24; that stretch reads SFLGKSLTLVVLGVFLFSGW.

It belongs to the bacterial sortase family. Class B subfamily.

It is found in the cell membrane. In terms of biological role, transpeptidase that anchors surface proteins to the cell wall. Recognizes and modifies its substrate by proteolytic cleavage of a C-terminal sorting signal. Following cleavage, a covalent intermediate is formed via a thioester bond between the sortase and its substrate, which is then transferred and covalently attached to the cell wall. Catalyzes a cell wall sorting reaction in which a surface protein with the consensus sorting signal NP(Q/K)(T/S)(N/G/S)(D/A) is cleaved between the fourth and fifth residues, and the fourth position is linked to the cell wall. This is not the major sortase in Listeria, it seems to anchor only 2 proteins, Hbp2 (SvpA) and Hbp1. In Listeria monocytogenes serovar 1/2a (strain ATCC BAA-679 / EGD-e), this protein is Sortase B.